The primary structure comprises 459 residues: Serine protease HTRA3 (459 aa).

The N-terminal stretch at 1–23 (MQARALLPATLATLATLAVSVLA) is a signal peptide. One can recognise an IGFBP N-terminal domain in the interval 27 to 90 (PAAPCPARCD…ECVRGVCRCR (64 aa)). 8 disulfides stabilise this stretch: cysteine 31–cysteine 54, cysteine 35–cysteine 56, cysteine 40–cysteine 57, cysteine 45–cysteine 60, cysteine 68–cysteine 82, cysteine 76–cysteine 87, cysteine 89–cysteine 107, and cysteine 96–cysteine 132. Residues 76–134 (CGDSLECVRGVCRCRWTHTVCGTDGHTYADVCALQAASRRALQISGTPVRQLQKGACPS) enclose the Kazal-like domain. A serine protease region spans residues 181–346 (GSGFIMSEAG…AIPSDRITRF (166 aa)). Residues histidine 197, aspartate 233, and serine 311 each act as charge relay system in the active site. A PDZ domain is found at 365–450 (IRMRTITPSL…EVRRGNDDLL (86 aa)).

Belongs to the peptidase S1C family. As to quaternary structure, homotrimer. Interacts with TGFB1; the interaction inhibits TGFB-mediated signaling. Interacts with BMP4; the interaction inhibits BMP4-mediated signaling. Interacts with TGFB2, GDF5 and MYH9. In terms of tissue distribution, expressed in the ovary, essentially in granulosa cells in a follicle-stage specific manner. Highest levels found in large luteinizing granulosa cells.

Its subcellular location is the secreted. Serine protease that cleaves beta-casein/CSN2 as well as several extracellular matrix (ECM) proteoglycans such as decorin/DCN, biglycan/BGN and fibronectin/FN1. Inhibits signaling mediated by TGF-beta family proteins possibly indirectly by degradation of these ECM proteoglycans. May act as a tumor suppressor. Negatively regulates, in vitro, trophoblast invasion during placental development and may be involved in the development of the placenta in vivo. May also have a role in ovarian development, granulosa cell differentiation and luteinization. The protein is Serine protease HTRA3 (Htra3) of Rattus norvegicus (Rat).